We begin with the raw amino-acid sequence, 619 residues long: Eukaryotic translation initiation factor 2-alpha kinase 1 (619 aa).

Residues 1-40 (MLGGSSVDGERDTDDDAAGAVAAPPAIDFPAEVSDPKYDE) are disordered. A compositionally biased stretch (low complexity) spans 18 to 28 (AGAVAAPPAID). Positions 85 to 104 (LHSKQVFKLLCQTFIKMGLL) match the SIFI-degron motif. Residues 167 to 580 (FEELAILGKG…ALQLLQSELF (414 aa)) enclose the Protein kinase domain. ATP contacts are provided by residues 173–181 (LGKGGYGRV) and Lys196. Thr283 is modified (phosphothreonine). The HRM 1 repeat unit spans residues 408–413 (ACPYVM). Asp440 serves as the catalytic Proton acceptor. Thr483, Thr485, and Thr490 each carry phosphothreonine; by autocatalysis. An HRM 2 repeat occupies 549–554 (RCPVQA).

The protein belongs to the protein kinase superfamily. Ser/Thr protein kinase family. GCN2 subfamily. Synthesized in an inactive form that binds to the N-terminal domain of CDC37. Has to be associated with a multiprotein complex containing Hsp90, CDC37 and PPP5C for maturation and activation by autophosphorylation. The phosphatase PPP5C modulates this activation. Homodimer; homodimerizes in presence of heme, forming a disulfide-linked inactive homodimer. Interacts with DELE1; binds both to full-length DELE1 and processed form of DELE1 (S-DELE1) in response to stress, leading to activate its protein kinase activity and trigger the integrated stress response (ISR). In terms of processing, activated by autophosphorylation; phosphorylated predominantly on serine and threonine residues, but also on tyrosine residues. Autophosphorylation at Thr-485 is required for kinase activation. The active autophosphorylated form apparently is largely refractory to cellular heme fluctuations. Ubiquitinated and degraded by the SIFI complex once the mitochondrial stress has been resolved, thereby providing stress response silencing. Within the SIFI complex, UBR4 initiates ubiquitin chain that are further elongated or branched by KCMF1. Expressed predominantly in erythroid cells, mature reticulocytes, as well as fetal liver nucleated erythroid cells. At much lower levels, expressed in hepatocytes and bone marrow-derived macrophages (at protein level).

It localises to the cytoplasm. The enzyme catalyses L-seryl-[protein] + ATP = O-phospho-L-seryl-[protein] + ADP + H(+). It catalyses the reaction L-threonyl-[protein] + ATP = O-phospho-L-threonyl-[protein] + ADP + H(+). In normal conditions, the protein kinase activity is inhibited; inhibition is relieved by various stress conditions. Inhibited by heme: in presence of heme, forms a disulfide-linked inactive homodimer. Heme depletion relieves inhibition and stimulates kinase activity by autophosphorylation. Inhibited by the heme metabolites biliverdin and bilirubin. Induced by oxidative stress generated by arsenite treatment. Binding of nitric oxide (NO) to the heme iron in the N-terminal heme-binding domain activates the kinase activity, while binding of carbon monoxide (CO) suppresses kinase activity. Protein kinase activity is also activated upon binding to DELE1 in response to various stress, triggering the integrated stress response (ISR): activated by full-length DELE1 in response to iron deficiency, while it is activated by the processed form of DELE1 (S-DELE1) in response to mitochondrial stress. Functionally, metabolic-stress sensing protein kinase that phosphorylates the alpha subunit of eukaryotic translation initiation factor 2 (EIF2S1/eIF-2-alpha) in response to various stress conditions. Key activator of the integrated stress response (ISR) required for adaptation to various stress, such as heme deficiency, oxidative stress, osmotic shock, mitochondrial dysfunction and heat shock. EIF2S1/eIF-2-alpha phosphorylation in response to stress converts EIF2S1/eIF-2-alpha in a global protein synthesis inhibitor, leading to a global attenuation of cap-dependent translation, while concomitantly initiating the preferential translation of ISR-specific mRNAs, such as the transcriptional activator ATF4, and hence allowing ATF4-mediated reprogramming. Acts as a key sensor of heme-deficiency: in normal conditions, binds hemin via a cysteine thiolate and histidine nitrogenous coordination, leading to inhibit the protein kinase activity. This binding occurs with moderate affinity, allowing it to sense the heme concentration within the cell: heme depletion relieves inhibition and stimulates kinase activity, activating the ISR. Thanks to this unique heme-sensing capacity, plays a crucial role to shut off protein synthesis during acute heme-deficient conditions. In red blood cells (RBCs), controls hemoglobin synthesis ensuring a coordinated regulation of the synthesis of its heme and globin moieties. It thereby plays an essential protective role for RBC survival in anemias of iron deficiency. Iron deficiency also triggers activation by full-length DELE1. Also activates the ISR in response to mitochondrial dysfunction: HRI/EIF2AK1 protein kinase activity is activated upon binding to the processed form of DELE1 (S-DELE1), thereby promoting the ATF4-mediated reprogramming. Also acts as an activator of mitophagy in response to mitochondrial damage: catalyzes phosphorylation of eIF-2-alpha (EIF2S1) following activation by S-DELE1, thereby promoting mitochondrial localization of EIF2S1, triggering PRKN-independent mitophagy. The chain is Eukaryotic translation initiation factor 2-alpha kinase 1 from Mus musculus (Mouse).